We begin with the raw amino-acid sequence, 314 residues long: Olfactory receptor 5P66 (314 aa).

Residues 1–28 (MAFLENGNHTAVSEFILLGLTDDPVLRI) are Extracellular-facing. Asn8 carries N-linked (GlcNAc...) asparagine glycosylation. A helical transmembrane segment spans residues 29–49 (VLFTIILCIYLVTVSGNLSTI). The Cytoplasmic segment spans residues 50-57 (LLIRVSSQ). Residues 58–78 (LHHPMYFFLSHLASADIGLSS) traverse the membrane as a helical segment. The Extracellular portion of the chain corresponds to 79–102 (SVTPNMLVNFLVERSTISYLGCGI). Cys100 and Cys192 form a disulfide bridge. A helical membrane pass occupies residues 103–123 (QLSSAALFGATECFLLAAMAY). Over 124–136 (DRFMAICNPLLYS) the chain is Cytoplasmic. The helical transmembrane segment at 137–157 (TKMSTKVCVQLIVGSYIAGFL) threads the bilayer. Over 158 to 199 (NASSFLLSFFSLLFCGQNIINDFFCDFAPLAELSCSDVSVFV) the chain is Extracellular. A helical transmembrane segment spans residues 200 to 220 (VVISFSAGTVTMLTVFVIAIS). Over 221–240 (YSYILITILKMRSTEGRQKA) the chain is Cytoplasmic. Residues 241 to 261 (FSTCTSHLTAVTLFYGTVTFI) form a helical membrane-spanning segment. Over 262 to 274 (YVMPKSSYSMDQN) the chain is Extracellular. The helical transmembrane segment at 275–295 (KIISVFYMVVVPMLNPLIYSL) threads the bilayer. Topologically, residues 296–314 (RNNEIKGALKRHFDRKTFS) are cytoplasmic.

The protein belongs to the G-protein coupled receptor 1 family.

Its subcellular location is the cell membrane. Functionally, potential odorant receptor. This chain is Olfactory receptor 5P66, found in Mus musculus (Mouse).